We begin with the raw amino-acid sequence, 250 residues long: Functional amyloid subunit FapC (250 aa).

Residues M1–A24 form the signal peptide. Residues N62–I95 form a FapC_R1 repeat. Positions T96–Q126 are linker 1. One copy of the FapC_R2 repeat lies at N127 to I160. Positions V161–V199 are linker 2. Residues N200–L233 form a FapC_R3 repeat. The Cys-X-X-Cys motif lies at C237–C240.

The protein belongs to the FapB/FapC family. As to quaternary structure, the major component of purified amyloid fibrils. Forms fibrils in vitro; in the presence of FapA the fibrils are about 50% wider. Interacts with FapA. Fibrillates in vitro; this is inhibited by FapA. Fibrils are resistant to boiling in 2% (weight/vol) SDS and require &gt;90% (vol/vol) formic acid to dissolve.

Its subcellular location is the fimbrium. The protein resides in the secreted. Functionally, the major functional amyloid subunit in this bacterium. Intrinsically disordered in its monomeric state. Upon overexpression of the endogenous six-gene locus (fapA-fapF) in situ, cells form large clumps during liquid growth, make large amounts of biofilm and produce amyloid fibrils. Expression of the 6 gene operon in E.coli strain BL21(DE3) induces flocculation and biofilm formation with copious extracellular fibrils. The chain is Functional amyloid subunit FapC from Pseudomonas fluorescens.